A 524-amino-acid polypeptide reads, in one-letter code: Probable glutamyl-tRNA reductase 3, chloroplastic (524 aa).

A chloroplast-targeting transit peptide spans 1-52 (MAVSNASVVLSPNLETSSSWYHHNPSSSLDLIRIHTLPMNKMTRRGLIQRVR). Residues 129–132 (TCNR), Ser-189, 194–196 (ENQ), and Gln-200 contribute to the substrate site. The active-site Nucleophile is the Cys-130. Position 269–274 (269–274 (GAGEMG)) interacts with NADP(+).

This sequence belongs to the glutamyl-tRNA reductase family.

The protein resides in the plastid. Its subcellular location is the chloroplast. The catalysed reaction is (S)-4-amino-5-oxopentanoate + tRNA(Glu) + NADP(+) = L-glutamyl-tRNA(Glu) + NADPH + H(+). Its pathway is porphyrin-containing compound metabolism; protoporphyrin-IX biosynthesis; 5-aminolevulinate from L-glutamyl-tRNA(Glu): step 1/2. It functions in the pathway porphyrin-containing compound metabolism; chlorophyll biosynthesis. Catalyzes the NADPH-dependent reduction of glutamyl-tRNA(Glu) to glutamate 1-semialdehyde (GSA). This is Probable glutamyl-tRNA reductase 3, chloroplastic (HEMA3) from Arabidopsis thaliana (Mouse-ear cress).